A 243-amino-acid polypeptide reads, in one-letter code: Type III pantothenate kinase (243 aa).

7-14 (DLGNSRFK) serves as a coordination point for ATP. Substrate contacts are provided by residues Tyr91 and 98–101 (GVDR). The active-site Proton acceptor is the Asp100. An ATP-binding site is contributed by Thr122. Thr172 provides a ligand contact to substrate.

The protein belongs to the type III pantothenate kinase family. Homodimer. Requires NH4(+) as cofactor. The cofactor is K(+).

It localises to the cytoplasm. The catalysed reaction is (R)-pantothenate + ATP = (R)-4'-phosphopantothenate + ADP + H(+). Its pathway is cofactor biosynthesis; coenzyme A biosynthesis; CoA from (R)-pantothenate: step 1/5. In terms of biological role, catalyzes the phosphorylation of pantothenate (Pan), the first step in CoA biosynthesis. The polypeptide is Type III pantothenate kinase (Stenotrophomonas maltophilia (strain K279a)).